The sequence spans 126 residues: MPTIQQLIRSERSKVQKKTKSPALKQCPQRRGVCTRVYTTTPKKPNSALRKVARVRLTSGFEVTAYIPGIGHNLQEHSVVLIRGGRVKDLPGVRYHIVRGTLDATGVKDRKQGRSKYGTKREKAKK.

Residues 1–28 (MPTIQQLIRSERSKVQKKTKSPALKQCP) form a disordered region. Aspartate 89 bears the 3-methylthioaspartic acid mark. A disordered region spans residues 104 to 126 (ATGVKDRKQGRSKYGTKREKAKK). A compositionally biased stretch (basic residues) spans 113–126 (GRSKYGTKREKAKK).

The protein belongs to the universal ribosomal protein uS12 family. Part of the 30S ribosomal subunit. Contacts proteins S8 and S17. May interact with IF1 in the 30S initiation complex.

Its function is as follows. With S4 and S5 plays an important role in translational accuracy. Interacts with and stabilizes bases of the 16S rRNA that are involved in tRNA selection in the A site and with the mRNA backbone. Located at the interface of the 30S and 50S subunits, it traverses the body of the 30S subunit contacting proteins on the other side and probably holding the rRNA structure together. The combined cluster of proteins S8, S12 and S17 appears to hold together the shoulder and platform of the 30S subunit. The chain is Small ribosomal subunit protein uS12 from Synechocystis sp. (strain ATCC 27184 / PCC 6803 / Kazusa).